We begin with the raw amino-acid sequence, 444 residues long: MPSHFDTVQLHAGQENPGDNAHRSRAVPIYATTSYVFENSKHGSQLFGLEVPGYVYSRFQNPTSNVLEERIAALEGGAAALAVSSGQAAQTLAIQGLAHTGDNIVSTSYLYGGTYNQFKISFKRFGIEARFVEGDNPEEFEKVFDERTKAVYLETIGNPKYNVPDFEKIVAIAHKHGIPVVVDNTFGAGGYFCQPIKYGADIVTHSATKWIGGHGTTIGGIIVDSGKFPWKDYPEKFPQFSQPAEGYHGTIYNEAYGNLAYIVHVRTELLRDLGPLMNPFASFLLLQGVETLSLRAERHGENALKLAKWLEQSPYVSWVSYPGLASHSHHENAKKYLSNGFGGVLSFGVKDLPNADKETDPFKLSGAQVVDNLKLASNLANVGDAKTLVIAPYFTTHKQLNDKEKLASGVTKDLIRVSVGIEFIDDIIADFQQSFETVFAGQKP.

The residue at position 44 (Ser44) is a Phosphoserine. Lys160 participates in a covalent cross-link: Glycyl lysine isopeptide (Lys-Gly) (interchain with G-Cter in ubiquitin). The residue at position 209 (Lys209) is an N6-(pyridoxal phosphate)lysine.

It belongs to the trans-sulfuration enzymes family. Homotetramer. Pyridoxal 5'-phosphate serves as cofactor.

It localises to the cytoplasm. The catalysed reaction is O-acetyl-L-homoserine + methanethiol = L-methionine + acetate + H(+). The enzyme catalyses O-acetyl-L-homoserine + hydrogen sulfide = L-homocysteine + acetate. It catalyses the reaction O-acetyl-L-serine + hydrogen sulfide = L-cysteine + acetate. It participates in amino-acid biosynthesis; L-methionine biosynthesis via de novo pathway; L-homocysteine from O-acetyl-L-homoserine. In terms of biological role, catalyzes the conversion of O-acetyl-L-homoserine (OAH) into homocysteine in the methionine biosynthesis pathway. Required to efficiently reduce toxic levels of hydrogen sulfide generated when the sulfate assimilation pathway (SAP) is active. Also catalyzes the conversion of O-acetylserine (OAS) into cysteine, the last step in the cysteine biosynthesis pathway. However, it seems that in S.cerevisiae cysteine biosynthesis occurs exclusively through the cystathionine pathway and not via direct incorporation of sulfur into OAS. It therefore has no metabolic role in cysteine biosynthesis and may only have a regulatory role controlling OAS levels. This chain is Homocysteine/cysteine synthase, found in Saccharomyces cerevisiae (strain ATCC 204508 / S288c) (Baker's yeast).